We begin with the raw amino-acid sequence, 721 residues long: Polyribonucleotide nucleotidyltransferase (721 aa).

The Mg(2+) site is built by Asp490 and Asp496. Positions 557 to 618 (PRILTLKINP…EAVRQKIEGL (62 aa)) constitute a KH domain. One can recognise an S1 motif domain in the interval 625–693 (GEEYEGTVVK…DRGKIDLIRP (69 aa)). The segment at 696 to 721 (EGKIAPREPRAARAGGDRGGRPPRRE) is disordered.

This sequence belongs to the polyribonucleotide nucleotidyltransferase family. Mg(2+) serves as cofactor.

The protein localises to the cytoplasm. It carries out the reaction RNA(n+1) + phosphate = RNA(n) + a ribonucleoside 5'-diphosphate. Functionally, involved in mRNA degradation. Catalyzes the phosphorolysis of single-stranded polyribonucleotides processively in the 3'- to 5'-direction. The polypeptide is Polyribonucleotide nucleotidyltransferase (Deinococcus geothermalis (strain DSM 11300 / CIP 105573 / AG-3a)).